The chain runs to 423 residues: UPF0229 protein PFLU_5583 (423 aa).

The disordered stretch occupies residues leucine 64 to glycine 109. Gly residues predominate over residues glutamine 92 to glycine 107.

It belongs to the UPF0229 family.

The chain is UPF0229 protein PFLU_5583 from Pseudomonas fluorescens (strain SBW25).